We begin with the raw amino-acid sequence, 102 residues long: Large ribosomal subunit protein bL21 (102 aa).

This sequence belongs to the bacterial ribosomal protein bL21 family. In terms of assembly, part of the 50S ribosomal subunit. Contacts protein L20.

Functionally, this protein binds to 23S rRNA in the presence of protein L20. This is Large ribosomal subunit protein bL21 from Nocardioides sp. (strain ATCC BAA-499 / JS614).